A 452-amino-acid polypeptide reads, in one-letter code: Pup--protein ligase (452 aa).

Residue E9 coordinates Mg(2+). An ATP-binding site is contributed by R53. Y55 lines the Mg(2+) pocket. D57 acts as the Proton acceptor in catalysis. Mg(2+) is bound at residue E63. ATP is bound by residues T66 and W419.

The protein belongs to the Pup ligase/Pup deamidase family. Pup-conjugating enzyme subfamily.

It catalyses the reaction ATP + [prokaryotic ubiquitin-like protein]-L-glutamate + [protein]-L-lysine = ADP + phosphate + N(6)-([prokaryotic ubiquitin-like protein]-gamma-L-glutamyl)-[protein]-L-lysine.. It participates in protein degradation; proteasomal Pup-dependent pathway. The protein operates within protein modification; protein pupylation. Its function is as follows. Catalyzes the covalent attachment of the prokaryotic ubiquitin-like protein modifier Pup to the proteasomal substrate proteins, thereby targeting them for proteasomal degradation. This tagging system is termed pupylation. The ligation reaction involves the side-chain carboxylate of the C-terminal glutamate of Pup and the side-chain amino group of a substrate lysine. The protein is Pup--protein ligase of Mycobacterium tuberculosis (strain KZN 1435 / MDR).